The sequence spans 250 residues: Proteasome subunit alpha type-2 (250 aa).

Lys-108 is covalently cross-linked (Glycyl lysine isopeptide (Lys-Gly) (interchain with G-Cter in ubiquitin)).

Belongs to the peptidase T1A family. In terms of assembly, the 26S proteasome consists of a 20S proteasome core and two 19S regulatory subunits. The 20S proteasome core is composed of 28 subunits that are arranged in four stacked rings, resulting in a barrel-shaped structure. The two end rings are each formed by seven alpha subunits, and the two central rings are each formed by seven beta subunits. The catalytic chamber with the active sites is on the inside of the barrel.

The protein resides in the cytoplasm. Its subcellular location is the nucleus. Functionally, the proteasome degrades poly-ubiquitinated proteins in the cytoplasm and in the nucleus. It is essential for the regulated turnover of proteins and for the removal of misfolded proteins. The proteasome is a multicatalytic proteinase complex that is characterized by its ability to cleave peptides with Arg, Phe, Tyr, Leu, and Glu adjacent to the leaving group at neutral or slightly basic pH. It has an ATP-dependent proteolytic activity. The chain is Proteasome subunit alpha type-2 (PRE8) from Saccharomyces cerevisiae (strain ATCC 204508 / S288c) (Baker's yeast).